The sequence spans 140 residues: Large ribosomal subunit protein bL17 (140 aa).

Belongs to the bacterial ribosomal protein bL17 family. In terms of assembly, part of the 50S ribosomal subunit. Contacts protein L32.

The protein is Large ribosomal subunit protein bL17 of Paramagnetospirillum magneticum (strain ATCC 700264 / AMB-1) (Magnetospirillum magneticum).